Here is a 98-residue protein sequence, read N- to C-terminus: Putative defensin-like protein 239 (98 aa).

Residues 1–23 (MRYTTSFIGLCFLIFLLKNLVNG) form the signal peptide. 4 cysteine pairs are disulfide-bonded: Cys-29–Cys-89, Cys-39–Cys-69, Cys-47–Cys-86, and Cys-67–Cys-88.

This sequence belongs to the DEFL family.

The protein resides in the secreted. The sequence is that of Putative defensin-like protein 239 (SCRL17) from Arabidopsis thaliana (Mouse-ear cress).